A 489-amino-acid polypeptide reads, in one-letter code: Dihydropyrimidinase 1 (489 aa).

3 residues coordinate Zn(2+): histidine 61, histidine 63, and lysine 156. The residue at position 156 (lysine 156) is an N6-carboxylysine. Tyrosine 161 is a binding site for substrate. Zn(2+)-binding residues include histidine 189 and histidine 245. Serine 295 provides a ligand contact to substrate. Zn(2+) is bound at residue aspartate 323. Substrate is bound at residue asparagine 344.

Belongs to the metallo-dependent hydrolases superfamily. Hydantoinase/dihydropyrimidinase family. As to quaternary structure, homotetramer. The cofactor is Zn(2+). Carboxylation allows a single lysine to coordinate two zinc ions.

The protein resides in the nucleus. It carries out the reaction 5,6-dihydrouracil + H2O = 3-(carbamoylamino)propanoate + H(+). This Caenorhabditis briggsae protein is Dihydropyrimidinase 1 (dhp-1).